Here is a 150-residue protein sequence, read N- to C-terminus: U1 small nuclear ribonucleoprotein C (150 aa).

A Matrin-type zinc finger spans residues 4 to 36; the sequence is YYCDYCKSYLTHDTMSVRKSHLQGRNHIKFYCD. Residues 66–127 are disordered; sequence SDAKKSNGSS…PPNLSGLPLP (62 aa). A compositionally biased stretch (basic and acidic residues) spans 80-92; the sequence is DIDKKENSSDHNK. Positions 103-112 are enriched in acidic residues; that stretch reads NDNDDDDDEM.

It belongs to the U1 small nuclear ribonucleoprotein C family. As to quaternary structure, U1 snRNP is composed of the 7 core Sm proteins B/B', D1, D2, D3, E, F and G that assemble in a heptameric protein ring on the Sm site of the small nuclear RNA to form the core snRNP, and at least 3 U1 snRNP-specific proteins U1-70K, U1-A and U1-C. U1-C interacts with U1 snRNA and the 5' splice-site region of the pre-mRNA.

It is found in the nucleus. In terms of biological role, component of the spliceosomal U1 snRNP, which is essential for recognition of the pre-mRNA 5' splice-site and the subsequent assembly of the spliceosome. U1-C is directly involved in initial 5' splice-site recognition for both constitutive and regulated alternative splicing. The interaction with the 5' splice-site seems to precede base-pairing between the pre-mRNA and the U1 snRNA. Stimulates commitment or early (E) complex formation by stabilizing the base pairing of the 5' end of the U1 snRNA and the 5' splice-site region. The protein is U1 small nuclear ribonucleoprotein C of Candida albicans (strain WO-1) (Yeast).